Here is a 250-residue protein sequence, read N- to C-terminus: ATP synthase subunit a (250 aa).

The next 6 membrane-spanning stretches (helical) occupy residues 26-46 (FTNASLFMVATVGAAAGFLYL), 84-104 (FFPMVFSLFMFILTANLLGMV), 114-134 (IIVTFALAVFVIGTVLLYGFY), 143-163 (LFVPQGVPGALLPLVVAIEII), 193-213 (FVASLSAFGALGIGGAILPLI), and 216-236 (VALTGLEFLVAFLQAYVFAVL).

This sequence belongs to the ATPase A chain family. F-type ATPases have 2 components, CF(1) - the catalytic core - and CF(0) - the membrane proton channel. CF(1) has five subunits: alpha(3), beta(3), gamma(1), delta(1), epsilon(1). CF(0) has three main subunits: a(1), b(2) and c(9-12). The alpha and beta chains form an alternating ring which encloses part of the gamma chain. CF(1) is attached to CF(0) by a central stalk formed by the gamma and epsilon chains, while a peripheral stalk is formed by the delta and b chains.

The protein resides in the cell inner membrane. In terms of biological role, key component of the proton channel; it plays a direct role in the translocation of protons across the membrane. The sequence is that of ATP synthase subunit a from Rhizobium meliloti (strain 1021) (Ensifer meliloti).